Here is a 124-residue protein sequence, read N- to C-terminus: Vicilin, 14 kDa component (124 aa).

The disordered stretch occupies residues 23-57 (LSKNAKSSSRRSVSSESGPFNLRSEDPLYSNNSGK). Residue N53 is glycosylated (N-linked (GlcNAc...) asparagine).

This sequence belongs to the 7S seed storage protein family.

It localises to the vacuole. The protein localises to the aleurone grain. Its function is as follows. Seed storage protein. This is Vicilin, 14 kDa component from Pisum sativum (Garden pea).